Here is a 431-residue protein sequence, read N- to C-terminus: MPPILQRLQQSTKMMSHRKILLLVLGCSTVSLLIHQGSQLSWYPKLFPLSCPPLRESPPRAKHMAVAFLKTHKTAGTTVQNILFRFAERHNLTVALPHPSCEHQFCYPRNFSAHFVHPATRPPHMLASHLRFDRAELERLMPPDTIYVTILREPAAMFESLFSYYNQYCPAFRRVPNASLETFLRAPEAYYRPGEHFAMFAHNTLAYDLGGDNERSPRDDAAYLAGLIRQVEEVFSLVMIAEYFDESLVLLRRLLAWDLDDVLYAKLNARAASSRLATIPEALARAARTWNALDAGLYDHFNATFWRRVARAGRACVEREARELREARQRLLRRCFGDEPVLRPAAQIRTKQLQPWQPSRKVDIMGYDLPSGGAGPTTEACLKLAMPEVQYSNYLLRKQKRRGGVRSRPESVLDNPPPRPIRALPRIPQGT.

The Cytoplasmic portion of the chain corresponds to Met-1 to Lys-19. Residues Ile-20–Leu-40 traverse the membrane as a helical; Signal-anchor for type II membrane protein segment. At Ser-41–Thr-431 the chain is on the lumenal side. N-linked (GlcNAc...) asparagine glycosylation is found at Asn-91, Asn-110, Asn-177, and Asn-302. Residues Lys-400–Thr-431 form a disordered region. Positions Ile-421–Thr-431 are enriched in low complexity.

This sequence belongs to the galactose-3-O-sulfotransferase family. Mg(2+) is required as a cofactor.

The protein localises to the golgi apparatus. It localises to the golgi stack membrane. It participates in protein modification; carbohydrate sulfation. In terms of biological role, transfers a sulfate to position 3 of non-reducing beta-galactosyl residues in N-glycans and core2-branched O-glycans. Has high activity towards Gal-beta-1,4-GlcNAc, Gal-beta-1,4(Fuc-alpha-1,3)GlcNAc and lower activity towards Gal-beta-1,3(Fuc-alpha-1,4)GlcNAc. The polypeptide is Galactose-3-O-sulfotransferase 3 (Gal3st3) (Mus musculus (Mouse)).